Consider the following 257-residue polypeptide: Exosome complex component mtr3 (257 aa).

Belongs to the RNase PH family. As to quaternary structure, component of the RNA exosome complex. Specifically part of the catalytically inactive RNA exosome core complex (Exo-9) may associate with the catalytic subunits rrp6 and dis3 in cytoplasmic- and nuclear-specific RNA exosome complex forms. Exo-9 is formed by a hexameric base ring of RNase PH domain-containing subunits and a cap ring consisting of csl4, rrp4 and rrp40.

It localises to the cytoplasm. The protein resides in the nucleus. It is found in the nucleolus. Its function is as follows. Non-catalytic component of the RNA exosome complex which has 3'-&gt;5' exoribonuclease activity and participates in a multitude of cellular RNA processing and degradation events. In the nucleus, the RNA exosome complex is involved in proper maturation of stable RNA species such as rRNA, snRNA and snoRNA, in the elimination of RNA processing by-products and non-coding 'pervasive' transcripts, such as antisense RNA species and cryptic unstable transcripts (CUTs), and of mRNAs with processing defects, thereby limiting or excluding their export to the cytoplasm. In the cytoplasm, the RNA exosome complex is involved in general mRNA turnover and in RNA surveillance pathways, preventing translation of aberrant mRNAs. The catalytic inactive RNA exosome core complex of 9 subunits (Exo-9) is proposed to play a pivotal role in the binding and presentation of RNA for ribonucleolysis, and to serve as a scaffold for the association with catalytic subunits and accessory proteins or complexes. ski6 is part of the hexameric ring of RNase PH domain-containing subunits proposed to form a central channel which threads RNA substrates for degradation. The chain is Exosome complex component mtr3 (mtr3) from Schizosaccharomyces pombe (strain 972 / ATCC 24843) (Fission yeast).